The following is a 151-amino-acid chain: Exosporium protein B (151 aa).

It localises to the spore wall. This chain is Exosporium protein B, found in Clostridium sporogenes (strain ATCC 15579).